The chain runs to 1084 residues: Cellulose synthase A catalytic subunit 2 [UDP-forming] (1084 aa).

Residue Met-1 is modified to N-acetylmethionine. Residues 1 to 278 (MNTGGRLIAG…RSSRINPYRM (278 aa)) are Cytoplasmic-facing. Residues Cys-39, Cys-42, Cys-58, Cys-61, Cys-66, Cys-69, Cys-81, and Cys-84 each contribute to the Zn(2+) site. Residues 39 to 85 (CQICGDEIELTVSSELFVACNECAFPVCRPCYEYERREGNQACPQCK) form an RING-type; degenerate zinc finger. Positions 230-259 (IKHEGGNNGRGSNDDDELDDPDMPMMDEGR) are disordered. The chain crosses the membrane as a helical span at residues 279–299 (LILCRLAILGLFFHYRILHPV). Topologically, residues 300-301 (ND) are extracellular. Residues 302–322 (AYGLWLTSVICEIWFAVSWIL) form a helical membrane-spanning segment. The Cytoplasmic portion of the chain corresponds to 323-867 (DQFPKWYPIE…INSVVYPWTS (545 aa)). Positions 361, 367, 368, and 397 each coordinate UDP-alpha-D-glucose. Asp-397 is an active-site residue. Residues 451–477 (VRERRAMKRDYEEFKVKINALVATAQK) adopt a coiled-coil conformation. Lys-538 contributes to the UDP-alpha-D-glucose binding site. Mn(2+) is bound by residues Lys-539 and Asp-563. Asp-784 is an active-site residue. A helical membrane pass occupies residues 868-888 (LPLIVYCSLPAVCLLTGKFIV). Topologically, residues 889–893 (PEISN) are extracellular. Residues 894–914 (YAGILFMLMFISIAVTGILEM) form a helical membrane-spanning segment. The Cytoplasmic portion of the chain corresponds to 915–929 (QWGGVGIDDWWRNEQ). A helical membrane pass occupies residues 930-950 (FWVIGGASSHLFALFQGLLKV). Topologically, residues 951-979 (LAGVNTNFTVTSKAADDGAFSELYIFKWT) are extracellular. Asn-957 carries N-linked (GlcNAc...) asparagine glycosylation. Residues 980–1000 (TLLIPPTTLLIINIIGVIVGV) traverse the membrane as a helical segment. Over 1001 to 1011 (SDAISNGYDSW) the chain is Cytoplasmic. A helical membrane pass occupies residues 1012–1032 (GPLFGRLFFALWVIVHLYPFL). Residues 1033–1041 (KGMLGKQDK) lie on the Extracellular side of the membrane. Residues 1042-1062 (MPTIIVVWSILLASILTLLWV) form a helical membrane-spanning segment. Residues 1063-1084 (RVNPFVAKGGPVLEICGLNCGN) are Cytoplasmic-facing.

The protein belongs to the glycosyltransferase 2 family. Plant cellulose synthase subfamily. As to quaternary structure, homodimer. Interaction through zinc finger domain. The cofactor is Mn(2+). Zn(2+) serves as cofactor. Strongly and ubiquitously expressed. Localized in some dividing and expanding cells, as well as in vascular tissues.

It is found in the cell membrane. The catalysed reaction is [(1-&gt;4)-beta-D-glucosyl](n) + UDP-alpha-D-glucose = [(1-&gt;4)-beta-D-glucosyl](n+1) + UDP + H(+). The protein operates within glycan metabolism; plant cellulose biosynthesis. Catalytic subunit of cellulose synthase terminal complexes ('rosettes'), required for beta-1,4-glucan microfibril crystallization, a major mechanism of the cell wall formation. Involved in the primary cell wall formation. In Arabidopsis thaliana (Mouse-ear cress), this protein is Cellulose synthase A catalytic subunit 2 [UDP-forming].